The sequence spans 173 residues: Ribosome maturation factor RimM (173 aa).

Positions 96-169 (PDEFYDHQLE…LITIDPPDGL (74 aa)) constitute a PRC barrel domain.

The protein belongs to the RimM family. As to quaternary structure, binds ribosomal protein uS19.

The protein resides in the cytoplasm. In terms of biological role, an accessory protein needed during the final step in the assembly of 30S ribosomal subunit, possibly for assembly of the head region. Essential for efficient processing of 16S rRNA. May be needed both before and after RbfA during the maturation of 16S rRNA. It has affinity for free ribosomal 30S subunits but not for 70S ribosomes. This chain is Ribosome maturation factor RimM, found in Mycolicibacterium gilvum (strain PYR-GCK) (Mycobacterium gilvum (strain PYR-GCK)).